Here is a 112-residue protein sequence, read N- to C-terminus: Large ribosomal subunit protein P1 (112 aa).

Positions 80 to 112 (AAAAPAAESKKEEKKKEEESDQSDDDMGFGLFD) are disordered. Positions 87 to 97 (ESKKEEKKKEE) are enriched in basic and acidic residues. Phosphoserine is present on residues S99 and S102.

Belongs to the eukaryotic ribosomal protein P1/P2 family. In terms of assembly, P1 and P2 exist as dimers at the large ribosomal subunit.

Its function is as follows. Plays an important role in the elongation step of protein synthesis. This is Large ribosomal subunit protein P1 (RpLP1) from Drosophila melanogaster (Fruit fly).